The following is a 141-amino-acid chain: Lutropin subunit beta (141 aa).

The signal sequence occupies residues M1 to A20. 6 cysteine pairs are disulfide-bonded: C29–C77, C43–C92, C46–C130, C54–C108, C58–C110, and C113–C120. The N-linked (GlcNAc...) asparagine glycan is linked to N33.

It belongs to the glycoprotein hormones subunit beta family. As to quaternary structure, heterodimer of a common alpha chain and a unique beta chain which confers biological specificity to thyrotropin, lutropin, follitropin and gonadotropin.

It localises to the secreted. Promotes spermatogenesis and ovulation by stimulating the testes and ovaries to synthesize steroids. In Ailuropoda melanoleuca (Giant panda), this protein is Lutropin subunit beta (LHB).